The sequence spans 579 residues: UPF0324 membrane protein DVU_2133 (579 aa).

The next 11 helical transmembrane spans lie at 26–45, 193–215, 225–243, 250–272, 305–327, 369–391, 401–423, 436–456, 476–495, 515–534, and 549–571; these read YWAI…LFLA, PFNI…AVGM, FLVG…LMMG, YWGI…TVGT, IGIP…TFIF, LTLA…PAFI, GGAW…AFLG, IQNV…CARV, FVLG…GSLG, LRNW…TNFR, and YVAG…FYIV.

The protein belongs to the UPF0324 family.

Its subcellular location is the cell membrane. The sequence is that of UPF0324 membrane protein DVU_2133 from Nitratidesulfovibrio vulgaris (strain ATCC 29579 / DSM 644 / CCUG 34227 / NCIMB 8303 / VKM B-1760 / Hildenborough) (Desulfovibrio vulgaris).